A 550-amino-acid polypeptide reads, in one-letter code: Membrane protein insertase YidC (550 aa).

Residues Asn-6–Asp-26 form a helical membrane-spanning segment. Disordered regions lie at residues Ala-28–Ala-54 and Gln-111–Tyr-132. Residues Lys-30–Val-52 are compositionally biased toward low complexity. Residues Gln-111–Lys-127 are compositionally biased toward polar residues. 4 consecutive transmembrane segments (helical) span residues Lys-346–Val-366, Leu-421–Leu-441, Leu-459–Ile-479, and Pro-500–Val-520.

The protein belongs to the OXA1/ALB3/YidC family. Type 1 subfamily. In terms of assembly, interacts with the Sec translocase complex via SecD. Specifically interacts with transmembrane segments of nascent integral membrane proteins during membrane integration.

It localises to the cell inner membrane. Functionally, required for the insertion and/or proper folding and/or complex formation of integral membrane proteins into the membrane. Involved in integration of membrane proteins that insert both dependently and independently of the Sec translocase complex, as well as at least some lipoproteins. Aids folding of multispanning membrane proteins. The sequence is that of Membrane protein insertase YidC from Cronobacter sakazakii (strain ATCC BAA-894) (Enterobacter sakazakii).